The sequence spans 113 residues: Putative pterin-4-alpha-carbinolamine dehydratase (113 aa).

It belongs to the pterin-4-alpha-carbinolamine dehydratase family.

The enzyme catalyses (4aS,6R)-4a-hydroxy-L-erythro-5,6,7,8-tetrahydrobiopterin = (6R)-L-erythro-6,7-dihydrobiopterin + H2O. The polypeptide is Putative pterin-4-alpha-carbinolamine dehydratase (Legionella pneumophila (strain Lens)).